Consider the following 201-residue polypeptide: LexA repressor (201 aa).

Positions 28–48 form a DNA-binding region, H-T-H motif; sequence LREIGGHLGINGTLGVMKHLD. Catalysis depends on for autocatalytic cleavage activity residues Ser-120 and Lys-157.

This sequence belongs to the peptidase S24 family. As to quaternary structure, homodimer.

It carries out the reaction Hydrolysis of Ala-|-Gly bond in repressor LexA.. Represses a number of genes involved in the response to DNA damage (SOS response), including recA and lexA. In the presence of single-stranded DNA, RecA interacts with LexA causing an autocatalytic cleavage which disrupts the DNA-binding part of LexA, leading to derepression of the SOS regulon and eventually DNA repair. The protein is LexA repressor of Geotalea uraniireducens (strain Rf4) (Geobacter uraniireducens).